The sequence spans 275 residues: MLKDIFGKKKYATITLYKDNAGPAVPSNTHSSKSNGNPVSEMKENKRMGARSRIAALIDKDTFIEYDSELESCNPLSFPKYAEKILAAMETSMEKDAVITGEGTIRGESCVLCVMNPDFMMGSMGSVVGEKITRAIEKAIEKKLPVIIFCASGGARMQEGILSLMQMAKTSAALGRLGEAGLLYISVLTDPTTGGVTASFAMLGDIIIAEPGALIGFAGPRVIEQTIRQKLPEGFQRSEFLLEKGFIDQIVSRKDMRNTLASLLRIHRLGGEMHA.

Positions 18–275 (KDNAGPAVPS…IHRLGGEMHA (258 aa)) constitute a CoA carboxyltransferase N-terminal domain. The segment at 23 to 47 (PAVPSNTHSSKSNGNPVSEMKENKR) is disordered. Positions 26–38 (PSNTHSSKSNGNP) are enriched in polar residues.

The protein belongs to the AccD/PCCB family. Acetyl-CoA carboxylase is a heterohexamer composed of biotin carboxyl carrier protein (AccB), biotin carboxylase (AccC) and two subunits each of ACCase subunit alpha (AccA) and ACCase subunit beta (AccD).

The protein localises to the cytoplasm. It carries out the reaction N(6)-carboxybiotinyl-L-lysyl-[protein] + acetyl-CoA = N(6)-biotinyl-L-lysyl-[protein] + malonyl-CoA. It participates in lipid metabolism; malonyl-CoA biosynthesis; malonyl-CoA from acetyl-CoA: step 1/1. Component of the acetyl coenzyme A carboxylase (ACC) complex. Biotin carboxylase (BC) catalyzes the carboxylation of biotin on its carrier protein (BCCP) and then the CO(2) group is transferred by the transcarboxylase to acetyl-CoA to form malonyl-CoA. This is Acetyl-coenzyme A carboxylase carboxyl transferase subunit beta from Alkaliphilus oremlandii (strain OhILAs) (Clostridium oremlandii (strain OhILAs)).